A 181-amino-acid chain; its full sequence is Protein OPG005 (181 aa).

This Vaccinia virus (strain Copenhagen) (VACV) protein is Protein OPG005 (OPG005).